The following is a 237-amino-acid chain: Ribitol-5-phosphate cytidylyltransferase (237 aa).

CTP contacts are provided by residues 7–10 (LAGG) and 80–86 (GEDRNET).

The protein belongs to the IspD/TarI cytidylyltransferase family. TarI subfamily.

The enzyme catalyses D-ribitol 5-phosphate + CTP + H(+) = CDP-L-ribitol + diphosphate. The protein operates within cell wall biogenesis; poly(ribitol phosphate) teichoic acid biosynthesis. In terms of biological role, catalyzes the transfer of the cytidylyl group of CTP to D-ribitol 5-phosphate. The sequence is that of Ribitol-5-phosphate cytidylyltransferase from Listeria innocua serovar 6a (strain ATCC BAA-680 / CLIP 11262).